Consider the following 416-residue polypeptide: Cyclin-L1-1 (416 aa).

The tract at residues 286–416 (KCTAGSANND…DSSKDRRRHH (131 aa)) is disordered. 4 stretches are compositionally biased toward basic and acidic residues: residues 304-315 (PHEKATDSKKSG), 328-374 (SYER…DKLK), 384-393 (RLKDSGGHSD), and 401-410 (RDRDYRDSSK).

The protein belongs to the cyclin family. Cyclin L subfamily. As to quaternary structure, forms a complex with CDKG1. Interacts with MOS4 and associates with the spliceosome.

It is found in the nucleus. Its function is as follows. Cognate cyclin for CDKG1. Required for synapsis and male meiosis, and for the proper splicing of specific resistance (R) genes. Involved in regulation of DNA methylation and transcriptional silencing. This chain is Cyclin-L1-1 (CYCL1-1), found in Arabidopsis thaliana (Mouse-ear cress).